The primary structure comprises 227 residues: UPF0758 protein Pcryo_2119 (227 aa).

Positions 102-224 constitute an MPN domain; that stretch reads GLGRSQMVKD…TLSYAENSLP (123 aa). H173, H175, and D186 together coordinate Zn(2+). Positions 173-186 match the JAMM motif motif; it reads HNHPHTDAKPSTAD.

It belongs to the UPF0758 family.

In Psychrobacter cryohalolentis (strain ATCC BAA-1226 / DSM 17306 / VKM B-2378 / K5), this protein is UPF0758 protein Pcryo_2119.